The sequence spans 137 residues: MLQPSNRKYRKDFKGRNRGVASRGNRVSFGEFGLKATECARITARQLEAARRTIARHIKRGGKITIRIFPDKPITKKPLEVRQGKGKGSVEYWVALVQPGRMIFEIEGVDEALAREAFNRAAAKLPLKCLFVKRTVM.

A disordered region spans residues 1-20 (MLQPSNRKYRKDFKGRNRGV). Residues 7–17 (RKYRKDFKGRN) are compositionally biased toward basic residues.

It belongs to the universal ribosomal protein uL16 family. As to quaternary structure, part of the 50S ribosomal subunit.

Functionally, binds 23S rRNA and is also seen to make contacts with the A and possibly P site tRNAs. In Coxiella burnetii (strain CbuK_Q154) (Coxiella burnetii (strain Q154)), this protein is Large ribosomal subunit protein uL16.